Here is an 878-residue protein sequence, read N- to C-terminus: Valine--tRNA ligase (878 aa).

The short motif at 45–55 is the 'HIGH' region element; the sequence is PNVTGQLHMGH. The 'KMSKS' region motif lies at 524-528; sequence KMSKS. Lys527 is an ATP binding site. The stretch at 804–871 forms a coiled coil; that stretch reads PLKDLIDLEK…REKEVLEQRI (68 aa).

This sequence belongs to the class-I aminoacyl-tRNA synthetase family. ValS type 1 subfamily. Monomer.

The protein resides in the cytoplasm. The enzyme catalyses tRNA(Val) + L-valine + ATP = L-valyl-tRNA(Val) + AMP + diphosphate. Functionally, catalyzes the attachment of valine to tRNA(Val). As ValRS can inadvertently accommodate and process structurally similar amino acids such as threonine, to avoid such errors, it has a 'posttransfer' editing activity that hydrolyzes mischarged Thr-tRNA(Val) in a tRNA-dependent manner. In Carboxydothermus hydrogenoformans (strain ATCC BAA-161 / DSM 6008 / Z-2901), this protein is Valine--tRNA ligase.